The chain runs to 229 residues: Ribonuclease T (229 aa).

The Exonuclease domain maps to 23 to 197 (VIIDVETAGF…YDTERTAELF (175 aa)). Positions 26, 28, 184, and 189 each coordinate Mg(2+). His-184 (proton donor/acceptor) is an active-site residue.

This sequence belongs to the RNase T family. Homodimer. Mg(2+) serves as cofactor.

Its function is as follows. Trims short 3' overhangs of a variety of RNA species, leaving a one or two nucleotide 3' overhang. Responsible for the end-turnover of tRNA: specifically removes the terminal AMP residue from uncharged tRNA (tRNA-C-C-A). Also appears to be involved in tRNA biosynthesis. The protein is Ribonuclease T of Haemophilus influenzae (strain PittEE).